A 164-amino-acid polypeptide reads, in one-letter code: GTP-dependent dephospho-CoA kinase (164 aa).

D40, V41, V42, D59, K61, and E113 together coordinate GTP.

The protein belongs to the GTP-dependent DPCK family.

It catalyses the reaction 3'-dephospho-CoA + GTP = GDP + CoA + H(+). The protein operates within cofactor biosynthesis; coenzyme A biosynthesis. Functionally, catalyzes the GTP-dependent phosphorylation of the 3'-hydroxyl group of dephosphocoenzyme A to form coenzyme A (CoA). The sequence is that of GTP-dependent dephospho-CoA kinase from Sulfolobus acidocaldarius (strain ATCC 33909 / DSM 639 / JCM 8929 / NBRC 15157 / NCIMB 11770).